We begin with the raw amino-acid sequence, 100 residues long: Small ribosomal subunit protein uS14c (100 aa).

The segment at 1–22 (MARKGLIQRENKRQKLEQKYHS) is disordered. Residues 7 to 20 (IQRENKRQKLEQKY) are compositionally biased toward basic and acidic residues.

Belongs to the universal ribosomal protein uS14 family. As to quaternary structure, part of the 30S ribosomal subunit.

Its subcellular location is the plastid. The protein localises to the chloroplast. Functionally, binds 16S rRNA, required for the assembly of 30S particles. In Daucus carota (Wild carrot), this protein is Small ribosomal subunit protein uS14c.